The chain runs to 253 residues: 5'/3'-nucleotidase SurE (253 aa).

4 residues coordinate a divalent metal cation: Asp-8, Asp-9, Ser-39, and Asn-92.

It belongs to the SurE nucleotidase family. It depends on a divalent metal cation as a cofactor.

It is found in the cytoplasm. It carries out the reaction a ribonucleoside 5'-phosphate + H2O = a ribonucleoside + phosphate. The catalysed reaction is a ribonucleoside 3'-phosphate + H2O = a ribonucleoside + phosphate. It catalyses the reaction [phosphate](n) + H2O = [phosphate](n-1) + phosphate + H(+). In terms of biological role, nucleotidase with a broad substrate specificity as it can dephosphorylate various ribo- and deoxyribonucleoside 5'-monophosphates and ribonucleoside 3'-monophosphates with highest affinity to 3'-AMP. Also hydrolyzes polyphosphate (exopolyphosphatase activity) with the preference for short-chain-length substrates (P20-25). Might be involved in the regulation of dNTP and NTP pools, and in the turnover of 3'-mononucleotides produced by numerous intracellular RNases (T1, T2, and F) during the degradation of various RNAs. In Klebsiella pneumoniae (strain 342), this protein is 5'/3'-nucleotidase SurE.